Here is a 267-residue protein sequence, read N- to C-terminus: 2-dehydro-3-deoxyphosphooctonate aldolase (267 aa).

It belongs to the KdsA family.

The protein resides in the cytoplasm. It catalyses the reaction D-arabinose 5-phosphate + phosphoenolpyruvate + H2O = 3-deoxy-alpha-D-manno-2-octulosonate-8-phosphate + phosphate. It participates in carbohydrate biosynthesis; 3-deoxy-D-manno-octulosonate biosynthesis; 3-deoxy-D-manno-octulosonate from D-ribulose 5-phosphate: step 2/3. Its pathway is bacterial outer membrane biogenesis; lipopolysaccharide biosynthesis. In Campylobacter jejuni subsp. doylei (strain ATCC BAA-1458 / RM4099 / 269.97), this protein is 2-dehydro-3-deoxyphosphooctonate aldolase.